Consider the following 469-residue polypeptide: Sorting and assembly machinery component 50 homolog (469 aa).

In terms of domain architecture, POTRA spans 45–125 (VVVQHVHFDG…LDVTFEVTEL (81 aa)). Lysine 255 is modified (N6-methyllysine).

This sequence belongs to the SAM50/omp85 family. As to quaternary structure, associates with the mitochondrial contact site and cristae organizing system (MICOS) complex, composed of at least MICOS10/MIC10, CHCHD3/MIC19, CHCHD6/MIC25, APOOL/MIC27, IMMT/MIC60, APOO/MIC23/MIC26 and QIL1/MIC13. This complex was also known under the names MINOS or MitOS complex. The MICOS complex associates with mitochondrial outer membrane proteins SAMM50, MTX1 and MTX2 (together described as components of the mitochondrial outer membrane sorting assembly machinery (SAM) complex) and DNAJC11, mitochondrial inner membrane protein TMEM11 and with HSPA9. The MICOS and SAM complexes together with DNAJC11 are part of a large protein complex spanning both membranes termed the mitochondrial intermembrane space bridging (MIB) complex. Interacts with IMMT/MIC60. Interacts with CHCHD3/MIC19. Interacts with ARMC1.

The protein localises to the mitochondrion outer membrane. It localises to the cytoplasm. It is found in the mitochondrion. Plays a crucial role in the maintenance of the structure of mitochondrial cristae and the proper assembly of the mitochondrial respiratory chain complexes. Required for the assembly of TOMM40 into the TOM complex. The sequence is that of Sorting and assembly machinery component 50 homolog (SAMM50) from Bos taurus (Bovine).